We begin with the raw amino-acid sequence, 914 residues long: Coatomer subunit beta' (914 aa).

7 WD repeats span residues 13–54 (SRSD…KDFE), 55–94 (VCDV…KVHS), 97–136 (AHSD…ACQR), 140–180 (GHTH…ANFT), 183–224 (GHEK…CVQT), 227–266 (GHAQ…LETC), and 352–390 (ACEI…NKAF).

This sequence belongs to the WD repeat COPB2 family. Oligomeric complex that consists of at least the alpha, beta, beta', gamma, delta, epsilon and zeta subunits.

The protein resides in the cytoplasm. It is found in the golgi apparatus membrane. Its subcellular location is the cytoplasmic vesicle. The protein localises to the COPI-coated vesicle membrane. Functionally, the coatomer is a cytosolic protein complex that binds to dilysine motifs and reversibly associates with Golgi non-clathrin-coated vesicles, which further mediate biosynthetic protein transport from the ER, via the Golgi up to the trans Golgi network. Coatomer complex is required for budding from Golgi membranes, and is essential for the retrograde Golgi-to-ER transport of dilysine-tagged proteins. In Drosophila melanogaster (Fruit fly), this protein is Coatomer subunit beta'.